A 471-amino-acid chain; its full sequence is Sulfate adenylyltransferase subunit 1 (471 aa).

Residues 24–240 (KSLLRFLTCG…ESADVERELE (217 aa)) form the tr-type G domain. A G1 region spans residues 33–40 (GSVDDGKS). 33-40 (GSVDDGKS) is a GTP binding site. The tract at residues 91–95 (GITID) is G2. Residues 112–115 (DTPG) are G3. GTP is bound by residues 112-116 (DTPGH) and 167-170 (NKMD). The G4 stretch occupies residues 167–170 (NKMD). A G5 region spans residues 204–206 (SAL).

Belongs to the TRAFAC class translation factor GTPase superfamily. Classic translation factor GTPase family. CysN/NodQ subfamily. Heterodimer composed of CysD, the smaller subunit, and CysN.

It carries out the reaction sulfate + ATP + H(+) = adenosine 5'-phosphosulfate + diphosphate. The protein operates within sulfur metabolism; hydrogen sulfide biosynthesis; sulfite from sulfate: step 1/3. In terms of biological role, with CysD forms the ATP sulfurylase (ATPS) that catalyzes the adenylation of sulfate producing adenosine 5'-phosphosulfate (APS) and diphosphate, the first enzymatic step in sulfur assimilation pathway. APS synthesis involves the formation of a high-energy phosphoric-sulfuric acid anhydride bond driven by GTP hydrolysis by CysN coupled to ATP hydrolysis by CysD. The protein is Sulfate adenylyltransferase subunit 1 of Aeromonas salmonicida (strain A449).